The following is a 361-amino-acid chain: tRNA-specific 2-thiouridylase MnmA (361 aa).

Residues 10–17 (GMSGGVDS) and Met36 contribute to the ATP site. Catalysis depends on Cys104, which acts as the Nucleophile. Cys104 and Cys202 are joined by a disulfide. Position 128 (Gly128) interacts with ATP. Residues 152–154 (KDQ) form an interaction with tRNA region. Catalysis depends on Cys202, which acts as the Cysteine persulfide intermediate. An interaction with tRNA region spans residues 308-309 (RY).

Belongs to the MnmA/TRMU family.

It localises to the cytoplasm. The enzyme catalyses S-sulfanyl-L-cysteinyl-[protein] + uridine(34) in tRNA + AH2 + ATP = 2-thiouridine(34) in tRNA + L-cysteinyl-[protein] + A + AMP + diphosphate + H(+). In terms of biological role, catalyzes the 2-thiolation of uridine at the wobble position (U34) of tRNA, leading to the formation of s(2)U34. This Clostridioides difficile (strain 630) (Peptoclostridium difficile) protein is tRNA-specific 2-thiouridylase MnmA.